Here is a 980-residue protein sequence, read N- to C-terminus: Valine--tRNA ligase (980 aa).

The disordered stretch occupies residues 1 to 40 (MADKGCEAAQSKDSSAPGSGEPRPKTEKELERERQKAAKL). Over residues 22-40 (PRPKTEKELERERQKAAKL) the composition is skewed to basic and acidic residues. The 'HIGH' region signature appears at 139 to 149 (PNVTGALHIGH). The 'KMSKS' region signature appears at 652-656 (KMSKS). Lys-655 provides a ligand contact to ATP.

Belongs to the class-I aminoacyl-tRNA synthetase family.

Its subcellular location is the cytoplasm. The enzyme catalyses tRNA(Val) + L-valine + ATP = L-valyl-tRNA(Val) + AMP + diphosphate. This Schizosaccharomyces pombe (strain 972 / ATCC 24843) (Fission yeast) protein is Valine--tRNA ligase (vas2).